The following is a 481-amino-acid chain: Alpha-ketoglutaric semialdehyde dehydrogenase 1 (481 aa).

NADP(+) contacts are provided by residues 154 to 155, 178 to 181, and 231 to 232; these read WN, KAPE, and GS. The active-site Proton acceptor is glutamate 253. Leucine 254 serves as a coordination point for NADP(+). The active-site Nucleophile is cysteine 287. Glutamate 384 is an NADP(+) binding site.

Belongs to the aldehyde dehydrogenase family. Homotetramer.

It carries out the reaction 2,5-dioxopentanoate + NADP(+) + H2O = 2-oxoglutarate + NADPH + 2 H(+). The catalysed reaction is 2,5-dioxopentanoate + NAD(+) + H2O = 2-oxoglutarate + NADH + 2 H(+). The enzyme catalyses succinate semialdehyde + NAD(+) + H2O = succinate + NADH + 2 H(+). Catalyzes the NAD(P)(+)-dependent oxidation of alpha-ketoglutaric semialdehyde (alphaKGSA) to alpha-ketoglutarate. Is involved in a degradation pathway of L-arabinose that allows A.brasilense to grow on L-arabinose as a sole carbon source. Prefers NAD(+) to NADP(+) as a cosubstrate. Displays broad substrate specificity: exhibits the highest activity with alphaKGSA and succinic semialdehyde as substrates, but to a lesser extent, is also active with glutaraldehyde, benzaldehyde, and a number of aldehydes from C3 to C8. This is Alpha-ketoglutaric semialdehyde dehydrogenase 1 (araE) from Azospirillum brasilense.